The chain runs to 161 residues: Phosphopantetheine adenylyltransferase (161 aa).

Serine 9 is a substrate binding site. ATP is bound by residues 9–10 (SF) and histidine 17. Substrate contacts are provided by lysine 41, threonine 73, and arginine 87. Residues 88 to 90 (GIR), glutamate 98, and 123 to 129 (YQYVSSS) contribute to the ATP site.

This sequence belongs to the bacterial CoaD family. As to quaternary structure, homohexamer. Mg(2+) is required as a cofactor.

It is found in the cytoplasm. The enzyme catalyses (R)-4'-phosphopantetheine + ATP + H(+) = 3'-dephospho-CoA + diphosphate. It functions in the pathway cofactor biosynthesis; coenzyme A biosynthesis; CoA from (R)-pantothenate: step 4/5. Reversibly transfers an adenylyl group from ATP to 4'-phosphopantetheine, yielding dephospho-CoA (dPCoA) and pyrophosphate. This chain is Phosphopantetheine adenylyltransferase, found in Levilactobacillus brevis (strain ATCC 367 / BCRC 12310 / CIP 105137 / JCM 1170 / LMG 11437 / NCIMB 947 / NCTC 947) (Lactobacillus brevis).